Here is a 980-residue protein sequence, read N- to C-terminus: Glutamate receptor ionotropic, kainate 5 (980 aa).

Residues methionine 1–alanine 14 form the signal peptide. At serine 15–proline 544 the chain is on the extracellular side. Intrachain disulfides connect cysteine 36/cysteine 292, cysteine 83/cysteine 334, and cysteine 165/cysteine 170. 10 N-linked (GlcNAc...) asparagine glycosylation sites follow: asparagine 219, asparagine 271, asparagine 285, asparagine 322, asparagine 372, asparagine 394, asparagine 400, asparagine 407, asparagine 414, and asparagine 478. A helical transmembrane segment spans residues alanine 545 to alanine 565. Residues arginine 566 to glycine 622 are Cytoplasmic-facing. The chain crosses the membrane as a helical span at residues valine 623–leucine 643. At threonine 644–asparagine 803 the chain is on the extracellular side. N-linked (GlcNAc...) asparagine glycosylation is present at asparagine 735. Residues isoleucine 804–methionine 824 form a helical membrane-spanning segment. At glutamate 825–glutamate 980 the chain is on the cytoplasmic side. Disordered regions lie at residues tyrosine 891 to cysteine 927 and alanine 944 to glutamate 980. The span at glycine 894 to histidine 903 shows a compositional bias: gly residues.

Belongs to the glutamate-gated ion channel (TC 1.A.10.1) family. GRIK5 subfamily. As to quaternary structure, homotetramer. Heterotetramer with GRIK2. Can form functional heteromeric receptors with GRIK1 and GRIK2. Can form functional heteromeric receptors with GRIK3.

The protein localises to the cell membrane. It localises to the postsynaptic cell membrane. Its subcellular location is the presynaptic cell membrane. Its function is as follows. Ionotropic glutamate receptor that functions as a cation-permeable ligand-gated ion channel, gated by L-glutamate and the glutamatergic agonist kainic acid. Cannot form functional channels on its own and produces channel activity only in heteromeric assembly with GRIK1 and GRIK2 subunits. Can form functional heteromeric receptors with GRIK3. This chain is Glutamate receptor ionotropic, kainate 5 (GRIK5), found in Homo sapiens (Human).